A 730-amino-acid polypeptide reads, in one-letter code: MMRHDRNVTEIDAETRPDENLWHSGDSAVGAPPAATPAAMTDLPEDRYLNRELSWLDFNARVLALADDNSLPLLERAKFLAIFASNLDEFYMVRVAGLKRRDEMGLSVRSADGLTPRKQLALIGEHTQRIATRHARVFLDSVRPALAEEGIHIVTWADLDQAERDELSTYFTEQVFPVLTPLAVDPAHPFPFVSGLSLNLAVMVRQTEDGGQHFARVKVPNNVDRFVELAAPRAGAEGENRGVVRFLPMEELIAAFLPLLFPGMEIVEHHAFRITRNADMEVEEDRDEDLLQALERELARRRFGPPVRLEIADDMTEGMLELLLRELDVHPGDVIEVPGLLDLSSLWQIYDLDRPALKDPAFVPDTHPAFADRESPKSIFATLREGDVLVHHPYDSFSTSVQRFIQQAAADPNVLAIKQTLYRTSGDSPIVRALIEAAEAGKQAVALVEIKARFDEQANIRWARALEQAGVHVVYGLVGLKTHCKTCLVVRREGSAIRRYCHIGTGNYNSKTARLYEDVGLLTAAPDIGADLTDLFNSLTGYSRKVSYRNLLVAPHGIRTGIIERVEREIAAHRERGQGRIRLKMNALVDEQVINSLYRASQAGVRVEVVVRGICALRPGVQGYSENIFVRSILGRFLEHSRIIHFRNINEFWIGSADMMHRNLDRRVEVLAQVKDPKLTAQLDELFESALDPSTRCWELGPDGQWTPSPQEGHTVRDHQVSLMERHRSP.

The span at 1-21 (MMRHDRNVTEIDAETRPDENL) shows a compositional bias: basic and acidic residues. The tract at residues 1–39 (MMRHDRNVTEIDAETRPDENLWHSGDSAVGAPPAATPAA) is disordered. Asn86 contributes to the ATP binding site. Mg(2+)-binding residues include Arg423 and Arg453. The active-site Phosphohistidine intermediate is His483. 3 residues coordinate ATP: Tyr516, Arg612, and His640.

This sequence belongs to the polyphosphate kinase 1 (PPK1) family. It depends on Mg(2+) as a cofactor. In terms of processing, an intermediate of this reaction is the autophosphorylated ppk in which a phosphate is covalently linked to a histidine residue through a N-P bond.

It catalyses the reaction [phosphate](n) + ATP = [phosphate](n+1) + ADP. Its function is as follows. Catalyzes the reversible transfer of the terminal phosphate of ATP to form a long-chain polyphosphate (polyP). The protein is Polyphosphate kinase of Mycolicibacterium paratuberculosis (strain ATCC BAA-968 / K-10) (Mycobacterium paratuberculosis).